Here is a 178-residue protein sequence, read N- to C-terminus: Large ribosomal subunit protein uL6 (178 aa).

The protein belongs to the universal ribosomal protein uL6 family. As to quaternary structure, part of the 50S ribosomal subunit.

In terms of biological role, this protein binds to the 23S rRNA, and is important in its secondary structure. It is located near the subunit interface in the base of the L7/L12 stalk, and near the tRNA binding site of the peptidyltransferase center. In Shouchella clausii (strain KSM-K16) (Alkalihalobacillus clausii), this protein is Large ribosomal subunit protein uL6.